The primary structure comprises 146 residues: MEKIDIFTDGACKGNPGRGGWGALLVMGEREKELFGGEPGTTNNRMELKAVIEALNALTRPCEVIVHTDSQYVQKGISEWIHGWKARGWKTAARAPVKNVDLWQALDAAQARHQIEWRWVRGHNGHVGNERADALANRGVETVNSN.

The 141-residue stretch at 1–141 (MEKIDIFTDG…ADALANRGVE (141 aa)) folds into the RNase H type-1 domain. Mg(2+) contacts are provided by Asp-9, Glu-47, Asp-69, and Asp-133.

The protein belongs to the RNase H family. Monomer. Requires Mg(2+) as cofactor.

It is found in the cytoplasm. The enzyme catalyses Endonucleolytic cleavage to 5'-phosphomonoester.. In terms of biological role, endonuclease that specifically degrades the RNA of RNA-DNA hybrids. The polypeptide is Ribonuclease H (Herminiimonas arsenicoxydans).